The chain runs to 476 residues: Bifunctional protein HldE (476 aa).

Residues 1 to 318 (MAQYSAEFKQ…ENAIHARPET (318 aa)) form a ribokinase region. Residue 195-198 (NMSE) coordinates ATP. Asp264 is an active-site residue. Residues 344–476 (MTNGCFDILH…VIEKIKLLKD (133 aa)) form a cytidylyltransferase region.

The protein in the N-terminal section; belongs to the carbohydrate kinase PfkB family. In the C-terminal section; belongs to the cytidylyltransferase family. As to quaternary structure, homodimer.

The catalysed reaction is D-glycero-beta-D-manno-heptose 7-phosphate + ATP = D-glycero-beta-D-manno-heptose 1,7-bisphosphate + ADP + H(+). It catalyses the reaction D-glycero-beta-D-manno-heptose 1-phosphate + ATP + H(+) = ADP-D-glycero-beta-D-manno-heptose + diphosphate. The protein operates within nucleotide-sugar biosynthesis; ADP-L-glycero-beta-D-manno-heptose biosynthesis; ADP-L-glycero-beta-D-manno-heptose from D-glycero-beta-D-manno-heptose 7-phosphate: step 1/4. It functions in the pathway nucleotide-sugar biosynthesis; ADP-L-glycero-beta-D-manno-heptose biosynthesis; ADP-L-glycero-beta-D-manno-heptose from D-glycero-beta-D-manno-heptose 7-phosphate: step 3/4. Its pathway is bacterial outer membrane biogenesis; LOS core biosynthesis. Its function is as follows. Catalyzes the phosphorylation of D-glycero-D-manno-heptose 7-phosphate at the C-1 position to selectively form D-glycero-beta-D-manno-heptose-1,7-bisphosphate. Functionally, catalyzes the ADP transfer from ATP to D-glycero-beta-D-manno-heptose 1-phosphate, yielding ADP-D-glycero-beta-D-manno-heptose. The sequence is that of Bifunctional protein HldE from Haemophilus influenzae (strain ATCC 51907 / DSM 11121 / KW20 / Rd).